The following is a 128-amino-acid chain: AECKVDVDSTDQMSFNTKEITIDKSCKTFTVNLTHSGSLPKNVMGHNWVLSKSADMAGIATDGMAAGIDKDYLKPGDSRVIAHTKIIGSGEKDSVTFDVSKLTAGESYEFFCSFPGHNSMMKGAVVLK.

In terms of domain architecture, Plastocyanin-like spans 1–128; sequence AECKVDVDST…SMMKGAVVLK (128 aa). Residues cysteine 3 and cysteine 26 are joined by a disulfide bond. Positions 46, 112, 117, and 121 each coordinate Cu cation.

It is found in the periplasm. Transfers electrons from cytochrome c551 to cytochrome oxidase. The chain is Azurin from Pseudomonas chlororaphis (Pseudomonas aureofaciens).